The primary structure comprises 356 residues: MEDIHARFHIDWPGFRLDVDLTLPGRGVTALFGHSGSGKTTLLRCIAGIERVSAGRLTFNGEVWQDEKIWVPTHKRPLGYVFQEASLFPHLTVLGNLRFGMKRASGPVRVSLDQAVELLGIGHLLDRKPDRLSGGERQRVAIARALAVSPRVLLMDEPLAALDLKRKQEILPYLERLHDELDIPVLYVSHSPDEVARLADHLVAMEEGRVIAAGPLKETLARLDLPIRLGEDAGAVLDAVVGERDESWHLARLDFPGGSLWTRDRGIPVGRKIRVRVLARDVSLARQRQEETSVLNLLRGRVDAIEDEDHPGLALVRVRVGESPLLARLTKRSASALGIVRGQEVWVQVKSVALME.

One can recognise an ABC transporter domain in the interval 1–232; sequence MEDIHARFHI…LDLPIRLGED (232 aa). Residue 33 to 40 coordinates ATP; it reads GHSGSGKT. Residues 291–356 form the Mop domain; sequence ETSVLNLLRG…VQVKSVALME (66 aa).

It belongs to the ABC transporter superfamily. Molybdate importer (TC 3.A.1.8) family. The complex is composed of two ATP-binding proteins (ModC), two transmembrane proteins (ModB) and a solute-binding protein (ModA).

The protein localises to the cell inner membrane. The catalysed reaction is molybdate(out) + ATP + H2O = molybdate(in) + ADP + phosphate + H(+). Its function is as follows. Part of the ABC transporter complex ModABC involved in molybdenum import. Responsible for energy coupling to the transport system. The chain is Molybdenum import ATP-binding protein ModC from Methylococcus capsulatus (strain ATCC 33009 / NCIMB 11132 / Bath).